The chain runs to 373 residues: Structure-specific endonuclease subunit EME2 (373 aa).

The segment at 24–52 (RPQTWEISDSDGEGVPAREVGTQAPSPAG) is disordered. The segment at 47–260 (APSPAGERRA…LPSKQHRDSQ (214 aa)) is nuclease-like domain; forms the post-nick DNA binding interface and is involved in DNA recognition and bending. The tract at residues 282 to 373 (GLRGVWWRQI…NPDLLLDLSS (92 aa)) is helix-hairpin-helix (2HhH); forms the pre-nick DNA binding interface and is involved in DNA recognition and bending.

The protein belongs to the EME1/MMS4 family. Part of the heterodimeric MUS81-EME2 complex; the complex forms specifically during the DNA replication phase of the cell cycle.

Its subcellular location is the nucleus. Functionally, non-catalytic subunit of the structure-specific, heterodimeric DNA endonuclease MUS81-EME2 which is involved in the maintenance of genome stability. In the complex, EME2 is required for DNA cleavage, participating in DNA recognition and bending. MUS81-EME2 cleaves 3'-flaps and nicked Holliday junctions, and exhibit limited endonuclease activity with 5' flaps and nicked double-stranded DNAs. MUS81-EME2 which is active during the replication of DNA is more specifically involved in replication fork processing. Replication forks frequently encounter obstacles to their passage, including DNA base lesions, DNA interstrand cross-links, difficult-to-replicate sequences, transcription bubbles, or tightly bound proteins. One mechanism for the restart of a stalled replication fork involves nucleolytic cleavage mediated by the MUS81-EME2 endonuclease. By acting upon the stalled fork, MUS81-EME2 generates a DNA double-strand break (DSB) that can be repaired by homologous recombination, leading to the restoration of an active fork. MUS81-EME2 could also function in telomere maintenance. The sequence is that of Structure-specific endonuclease subunit EME2 from Mus musculus (Mouse).